We begin with the raw amino-acid sequence, 302 residues long: tRNA pseudouridine synthase B (302 aa).

D45 functions as the Nucleophile in the catalytic mechanism.

The protein belongs to the pseudouridine synthase TruB family. Type 1 subfamily.

It carries out the reaction uridine(55) in tRNA = pseudouridine(55) in tRNA. Its function is as follows. Responsible for synthesis of pseudouridine from uracil-55 in the psi GC loop of transfer RNAs. The protein is tRNA pseudouridine synthase B of Francisella philomiragia subsp. philomiragia (strain ATCC 25017 / CCUG 19701 / FSC 153 / O#319-036).